Reading from the N-terminus, the 121-residue chain is uncharacterized protein (121 aa).

The next 3 helical transmembrane spans lie at 1–21 (MILWGGSGGYLVIILYTIMPV), 55–75 (LKYINAFKGLLFHVCLHFCSI), and 92–112 (LFFKAAVISGIFRYTIPIHFL).

The protein localises to the membrane. This is an uncharacterized protein from Saccharomyces cerevisiae (strain ATCC 204508 / S288c) (Baker's yeast).